A 180-amino-acid polypeptide reads, in one-letter code: Adenine phosphoribosyltransferase (180 aa).

This sequence belongs to the purine/pyrimidine phosphoribosyltransferase family. As to quaternary structure, homodimer.

The protein resides in the cytoplasm. The catalysed reaction is AMP + diphosphate = 5-phospho-alpha-D-ribose 1-diphosphate + adenine. The protein operates within purine metabolism; AMP biosynthesis via salvage pathway; AMP from adenine: step 1/1. Catalyzes a salvage reaction resulting in the formation of AMP, that is energically less costly than de novo synthesis. The sequence is that of Adenine phosphoribosyltransferase from Rhizobium johnstonii (strain DSM 114642 / LMG 32736 / 3841) (Rhizobium leguminosarum bv. viciae).